A 554-amino-acid chain; its full sequence is Probable oligo-1,6-glucosidase 3 (554 aa).

D199 functions as the Nucleophile in the catalytic mechanism. E256 acts as the Proton donor in catalysis.

The protein belongs to the glycosyl hydrolase 13 family.

The protein localises to the cytoplasm. The enzyme catalyses Hydrolysis of (1-&gt;6)-alpha-D-glucosidic linkages in some oligosaccharides produced from starch and glycogen by alpha-amylase, and in isomaltose.. This is Probable oligo-1,6-glucosidase 3 (yugT) from Bacillus subtilis (strain 168).